We begin with the raw amino-acid sequence, 334 residues long: Glyceraldehyde-3-phosphate dehydrogenase 1 (334 aa).

NAD(+)-binding positions include 12 to 13 (RI), D35, and R79. D-glyceraldehyde 3-phosphate is bound by residues 152–154 (SCT), T183, R198, 211–212 (SG), and R234. C153 serves as the catalytic Nucleophile. N315 provides a ligand contact to NAD(+).

This sequence belongs to the glyceraldehyde-3-phosphate dehydrogenase family. In terms of assembly, homotetramer.

Its subcellular location is the cytoplasm. The enzyme catalyses D-glyceraldehyde 3-phosphate + phosphate + NAD(+) = (2R)-3-phospho-glyceroyl phosphate + NADH + H(+). It functions in the pathway carbohydrate degradation; glycolysis; pyruvate from D-glyceraldehyde 3-phosphate: step 1/5. With respect to regulation, resistant to pentalenolactone. Catalyzes the oxidative phosphorylation of glyceraldehyde 3-phosphate (G3P) to 1,3-bisphosphoglycerate (BPG) using the cofactor NAD. The first reaction step involves the formation of a hemiacetal intermediate between G3P and a cysteine residue, and this hemiacetal intermediate is then oxidized to a thioester, with concomitant reduction of NAD to NADH. The reduced NADH is then exchanged with the second NAD, and the thioester is attacked by a nucleophilic inorganic phosphate to produce BPG. The chain is Glyceraldehyde-3-phosphate dehydrogenase 1 (gap1) from Streptomyces avermitilis (strain ATCC 31267 / DSM 46492 / JCM 5070 / NBRC 14893 / NCIMB 12804 / NRRL 8165 / MA-4680).